A 161-amino-acid polypeptide reads, in one-letter code: Protein-export protein SecB (161 aa).

Belongs to the SecB family. Homotetramer, a dimer of dimers. One homotetramer interacts with 1 SecA dimer.

Its subcellular location is the cytoplasm. In terms of biological role, one of the proteins required for the normal export of preproteins out of the cell cytoplasm. It is a molecular chaperone that binds to a subset of precursor proteins, maintaining them in a translocation-competent state. It also specifically binds to its receptor SecA. This chain is Protein-export protein SecB, found in Methylocella silvestris (strain DSM 15510 / CIP 108128 / LMG 27833 / NCIMB 13906 / BL2).